We begin with the raw amino-acid sequence, 184 residues long: Holliday junction branch migration complex subunit RuvA (184 aa).

The domain I stretch occupies residues 1-64 (MIKAIEGIIT…EDANLLYGFI (64 aa)). A domain II region spans residues 65–137 (KESEQRIFEM…LSDAKFGEIN (73 aa)). Residue Asn137 is a region of interest, flexible linker. The segment at 138–184 (SMPSYQNEAFMALESLGFKRDRISKVLNECSSNDTASLIKEALKKLA) is domain III.

Belongs to the RuvA family. In terms of assembly, homotetramer. Forms an RuvA(8)-RuvB(12)-Holliday junction (HJ) complex. HJ DNA is sandwiched between 2 RuvA tetramers; dsDNA enters through RuvA and exits via RuvB. An RuvB hexamer assembles on each DNA strand where it exits the tetramer. Each RuvB hexamer is contacted by two RuvA subunits (via domain III) on 2 adjacent RuvB subunits; this complex drives branch migration. In the full resolvosome a probable DNA-RuvA(4)-RuvB(12)-RuvC(2) complex forms which resolves the HJ.

It is found in the cytoplasm. The RuvA-RuvB-RuvC complex processes Holliday junction (HJ) DNA during genetic recombination and DNA repair, while the RuvA-RuvB complex plays an important role in the rescue of blocked DNA replication forks via replication fork reversal (RFR). RuvA specifically binds to HJ cruciform DNA, conferring on it an open structure. The RuvB hexamer acts as an ATP-dependent pump, pulling dsDNA into and through the RuvAB complex. HJ branch migration allows RuvC to scan DNA until it finds its consensus sequence, where it cleaves and resolves the cruciform DNA. This chain is Holliday junction branch migration complex subunit RuvA, found in Campylobacter fetus subsp. fetus (strain 82-40).